Here is a 1128-residue protein sequence, read N- to C-terminus: Apoptosis-stimulating of p53 protein 2 (1128 aa).

Disordered stretches follow at residues 86-106 and 322-341; these read PGRD…RNGV and KENL…ASAP. Residues 322–339 show a composition bias toward polar residues; it reads KENLPVSSDGNLPQQAAS. The tract at residues 332 to 348 is interaction with APPBP1; it reads NLPQQAASAPSRVAAVG. At S480 the chain carries Phosphoserine. 2 disordered regions span residues 494 to 598 and 655 to 706; these read NVAK…LPPF and NQQQ…LPFL. Over residues 528-537 the composition is skewed to polar residues; it reads GSSQQLSTVV. S556, S569, S572, and S576 each carry phosphoserine. Polar residues predominate over residues 558-575; it reads SIPSVGQDQTLSPGSKQE. Over residues 655-670 the composition is skewed to polar residues; that stretch reads NQQQHPENIYSNSQGK. A phosphoserine mark is found at S698, S714, and S737. Disordered stretches follow at residues 724 to 748 and 802 to 909; these read KLSN…NGPN and SLVP…TNLR. A compositionally biased stretch (low complexity) spans 840–849; it reads NSPNLQNNPE. Positions 866 to 875 match the SH3-binding motif; the sequence is YPPYPPPPYP. Over residues 867–876 the composition is skewed to pro residues; that stretch reads PPYPPPPYPS. The segment at 876–1128 is mediates interaction with APC2; the sequence is SGEPEGPGED…RIKPRQRSLA (253 aa). ANK repeat units follow at residues 926-957, 958-990, 991-1024, and 1025-1067; these read PLAL…LPND, EGIT…AADS, DGWT…MTYS, and DMQT…ALWD. The 63-residue stretch at 1057–1119 folds into the SH3 domain; that stretch reads MNKGVIYALW…PRNLLGLYPR (63 aa).

The protein belongs to the ASPP family. Interacts with P53/TP53; the interaction promotes pro-apoptotic activity. Interacts with BCL2. Interacts with protein phosphatase 1. Interacts with RELA NF-kappa-B subunit. This interaction probably prevents the activation of apoptosis, possibly by preventing its interaction with TP53. Interacts with APC2 and NAE1. Interacts with DDX42 (via the C-terminus); the interaction is not inhibited by TP53BP2 ubiquitination and is independent of p53/TP53. Widely expressed. Expressed in spleen, thymus, prostate, testis, ovary, small intestine, colon and peripheral blood leukocyte. Reduced expression in breast carcinomas expressing a wild-type TP53 protein. Overexpressed in lung cancer cell lines.

It localises to the cytoplasm. Its subcellular location is the perinuclear region. The protein localises to the nucleus. In terms of biological role, regulator that plays a central role in regulation of apoptosis and cell growth via its interactions with proteins such as TP53. Regulates TP53 by enhancing the DNA binding and transactivation function of TP53 on the promoters of proapoptotic genes in vivo. Inhibits the ability of NAE1 to conjugate NEDD8 to CUL1, and thereby decreases NAE1 ability to induce apoptosis. Impedes cell cycle progression at G2/M. Its apoptosis-stimulating activity is inhibited by its interaction with DDX42. The sequence is that of Apoptosis-stimulating of p53 protein 2 (TP53BP2) from Homo sapiens (Human).